A 324-amino-acid chain; its full sequence is Alkanal monooxygenase beta chain (324 aa).

Belongs to the bacterial luciferase oxidoreductase family. In terms of assembly, heterodimer of an alpha and a beta chain.

The enzyme catalyses a long-chain fatty aldehyde + FMNH2 + O2 = a long-chain fatty acid + hnu + FMN + H2O + 2 H(+). Functionally, light-emitting reaction in luminous bacteria. The specific role of the beta subunit is unknown, but it is absolutely required for bioluminescence activity. This is Alkanal monooxygenase beta chain (luxB) from Vibrio harveyi (Beneckea harveyi).